The following is a 360-amino-acid chain: G-protein coupled receptor 15 (360 aa).

The Extracellular segment spans residues 1–33; that stretch reads MDPEETSVYLDYYYATSPNSDIRETHSHVPYTS. The helical transmembrane segment at 34–54 threads the bilayer; the sequence is VFLPVFYTAVFLTGVLGNLVL. Over 55–69 the chain is Cytoplasmic; sequence MGALHFKPGSRRLID. A helical transmembrane segment spans residues 70–90; that stretch reads IFIINLAASDFIFLVTLPLWV. The Extracellular segment spans residues 91-120; sequence DKEASLGLWRTGSFLCKGSSYMISVNMHCS. Residues 121–141 traverse the membrane as a helical segment; sequence VLLLTCMSVDRYLAIVWPVVS. The Cytoplasmic portion of the chain corresponds to 142–149; sequence RKFRRTDC. The chain crosses the membrane as a helical span at residues 150–170; sequence AYVVCASIWFISCLLGLPTLL. Residues 171-192 lie on the Extracellular side of the membrane; that stretch reads SRELTLIDDKPYCAEKKATPIK. The chain crosses the membrane as a helical span at residues 193 to 213; that stretch reads LIWSLVALIFTFFVPLLSIVT. Topologically, residues 214–239 are cytoplasmic; the sequence is CYCCIARKLCAHYQQSGKHNKKLKKS. Residues 240–260 traverse the membrane as a helical segment; the sequence is IKIIFIVVAAFLVSWLPFNTF. Residues 261–284 are Extracellular-facing; the sequence is KFLAIVSGLRQEHYLPSAILQLGM. A helical membrane pass occupies residues 285-305; sequence EVSGPLAFANSCVNPFIYYIF. Over 306 to 360 the chain is Cytoplasmic; sequence DSYIRRAIVHCLCPCLKNYDFGSSTETSDSHLTKALSTFIHAEDFARRRKRSVSL. Ser359 carries the phosphoserine modification.

It belongs to the G-protein coupled receptor 1 family. Interacts with adapter YWHAE; this interaction promotes ER-to-Golgi transport of GPR15. Interacts with GNAI1; this interaction initiates the signaling pathway. In terms of processing, phosphorylation is necessary for YWHAE binding and efficient surface expression. Post-translationally, O-glycosylated. Sialylated O-glycans in the N-terminal tail inhibits binding of GPR15LG. Sulfation is required for efficient binding of GPR15LG. Highly expressed in lymphoid tissues, including macrophages and peripheral blood mononuclear cells.

The protein localises to the cell membrane. Functionally, g protein-coupled receptor that plays an important role in immune homeostasis. Acts via its natural ligand GPR15LG, a chemokine-like polypeptide strongly expressed in gastrointestinal tissues. GPR15-GPR15LG signaling axis regulates intestinal homeostasis and inflammation through the migration of immune cells. Controls thereby the specific homing of T-cells, particularly FOXP3+ regulatory T-cells (Tregs), to the large intestine lamina propria. Also required for skin localization of thymus-derived dendritic epidermal T-cells. Plays an important role in mediating cytoprotective function as well as angiogenesis of thrombomodulin. Mechanistically, preferentially signals through the Gi/o pathway to inhibit adenylate cyclase activity and activate a phosphatidylinositol-calcium second messenger system that regulates the release of Ca(2+) ions from intracellular stores. (Microbial infection) Acts as an alternative coreceptor with CD4 for HIV-1 infection. The polypeptide is G-protein coupled receptor 15 (GPR15) (Homo sapiens (Human)).